The sequence spans 473 residues: Photosystem II CP43 reaction center protein (473 aa).

The propeptide occupies 1–14; the sequence is MKTLYSLRRFYHVE. Residue Thr15 is modified to N-acetylthreonine. Phosphothreonine is present on Thr15. Transmembrane regions (helical) follow at residues 69–93, 134–155, 178–200, 255–275, and 291–312; these read LFEV…PHLA, LLGP…KDRN, KALY…RKIT, KPFA…LSYS, and WFNN…ASQA. Glu367 contacts [CaMn4O5] cluster. Residues 447–471 traverse the membrane as a helical segment; that stretch reads RARAAAAGFEKGIDRDFEPVLSMTP.

The protein belongs to the PsbB/PsbC family. PsbC subfamily. PSII is composed of 1 copy each of membrane proteins PsbA, PsbB, PsbC, PsbD, PsbE, PsbF, PsbH, PsbI, PsbJ, PsbK, PsbL, PsbM, PsbT, PsbX, PsbY, PsbZ, Psb30/Ycf12, at least 3 peripheral proteins of the oxygen-evolving complex and a large number of cofactors. It forms dimeric complexes. Binds multiple chlorophylls and provides some of the ligands for the Ca-4Mn-5O cluster of the oxygen-evolving complex. It may also provide a ligand for a Cl- that is required for oxygen evolution. PSII binds additional chlorophylls, carotenoids and specific lipids. serves as cofactor.

Its subcellular location is the plastid. It is found in the chloroplast thylakoid membrane. One of the components of the core complex of photosystem II (PSII). It binds chlorophyll and helps catalyze the primary light-induced photochemical processes of PSII. PSII is a light-driven water:plastoquinone oxidoreductase, using light energy to abstract electrons from H(2)O, generating O(2) and a proton gradient subsequently used for ATP formation. The polypeptide is Photosystem II CP43 reaction center protein (Ipomoea purpurea (Common morning glory)).